Here is a 133-residue protein sequence, read N- to C-terminus: Large ribosomal subunit protein bL17 (133 aa).

This sequence belongs to the bacterial ribosomal protein bL17 family. In terms of assembly, part of the 50S ribosomal subunit. Contacts protein L32.

The protein is Large ribosomal subunit protein bL17 of Alteromonas mediterranea (strain DSM 17117 / CIP 110805 / LMG 28347 / Deep ecotype).